The sequence spans 219 residues: Ribonuclease HII (219 aa).

One can recognise an RNase H type-2 domain in the interval 30 to 219 (RVIAGIDEAG…VREHVTCPSS (190 aa)). A divalent metal cation-binding residues include D36, E37, and D128.

This sequence belongs to the RNase HII family. The cofactor is Mn(2+). It depends on Mg(2+) as a cofactor.

It is found in the cytoplasm. The enzyme catalyses Endonucleolytic cleavage to 5'-phosphomonoester.. Its function is as follows. Endonuclease that specifically degrades the RNA of RNA-DNA hybrids. This Pelobacter propionicus (strain DSM 2379 / NBRC 103807 / OttBd1) protein is Ribonuclease HII.